The sequence spans 62 residues: Potassium channel toxin alpha-KTx 6.21 (62 aa).

Residues 1 to 24 (MNAKLIYLLLVVTTMMLTFDTTQA) form the signal peptide. 4 cysteine pairs are disulfide-bonded: Cys29–Cys50, Cys35–Cys55, Cys39–Cys57, and Cys45–Cys60. Val61 is modified (valine amide).

This sequence belongs to the short scorpion toxin superfamily. Potassium channel inhibitor family. Alpha-KTx 06 subfamily. In terms of processing, C-terminal amidation is important for activity. There is a 50-70-fold decrease in ability to inhibit Kv1.2/KCNA2 when the toxin is not amidated. This decrease may be explained by a 23-fold slower association rate (k(on)) together with a 2-fold faster dissociation rate (k(off)). As to expression, expressed by the venom gland.

It localises to the secreted. Functionally, reversible blocker of voltage-gated potassium channels with fast binding and unbinding kinetics. Has highest activity on human voltage-gated potassium channel Kv1.2/KCNA2 channels (IC(50)=0.11-0.16 nM), whereas its affinity for other channels tested was in the nanomolar range (hKv1.1/KCNA1, IC(50)=253 nM; hKv1.3/KCNA3, IC(50)=91 nM; and hKCa3.1/KCNN4, IC(50)=70 nM). In Urodacus yaschenkoi (Inland robust scorpion), this protein is Potassium channel toxin alpha-KTx 6.21.